The primary structure comprises 309 residues: Tagatose-6-phosphate kinase (309 aa).

This sequence belongs to the carbohydrate kinase PfkB family. LacC subfamily.

It carries out the reaction D-tagatofuranose 6-phosphate + ATP = D-tagatofuranose 1,6-bisphosphate + ADP + H(+). It participates in carbohydrate metabolism; D-tagatose 6-phosphate degradation; D-glyceraldehyde 3-phosphate and glycerone phosphate from D-tagatose 6-phosphate: step 1/2. The polypeptide is Tagatose-6-phosphate kinase (Streptococcus pyogenes serotype M5 (strain Manfredo)).